We begin with the raw amino-acid sequence, 105 residues long: Large ribosomal subunit protein uL24 (105 aa).

Belongs to the universal ribosomal protein uL24 family. As to quaternary structure, part of the 50S ribosomal subunit.

One of two assembly initiator proteins, it binds directly to the 5'-end of the 23S rRNA, where it nucleates assembly of the 50S subunit. In terms of biological role, one of the proteins that surrounds the polypeptide exit tunnel on the outside of the subunit. The chain is Large ribosomal subunit protein uL24 from Methylococcus capsulatus (strain ATCC 33009 / NCIMB 11132 / Bath).